The following is a 227-amino-acid chain: ATP-dependent dethiobiotin synthetase BioD (227 aa).

Residue 13–18 coordinates ATP; that stretch reads DIGKTY. Residue Thr-17 coordinates Mg(2+). Lys-38 is a catalytic residue. Ser-42 is a binding site for substrate. Residues Asp-55, 116 to 119, and 179 to 180 contribute to the ATP site; these read EGSG and NN. Asp-55 and Glu-116 together coordinate Mg(2+).

Belongs to the dethiobiotin synthetase family. As to quaternary structure, homodimer. Requires Mg(2+) as cofactor.

The protein resides in the cytoplasm. The catalysed reaction is (7R,8S)-7,8-diammoniononanoate + CO2 + ATP = (4R,5S)-dethiobiotin + ADP + phosphate + 3 H(+). It functions in the pathway cofactor biosynthesis; biotin biosynthesis; biotin from 7,8-diaminononanoate: step 1/2. Catalyzes a mechanistically unusual reaction, the ATP-dependent insertion of CO2 between the N7 and N8 nitrogen atoms of 7,8-diaminopelargonic acid (DAPA, also called 7,8-diammoniononanoate) to form a ureido ring. This is ATP-dependent dethiobiotin synthetase BioD from Clostridium botulinum (strain ATCC 19397 / Type A).